We begin with the raw amino-acid sequence, 30 residues long: Snaclec carinactivase-1 regulatory subunit 14 kDa chain (30 aa).

The C-type lectin domain occupies 1 to 30 (DCLPDWFHYEGHCYRVFDEPKKWADAEKFC). Residues C2 and C13 are joined by a disulfide bond.

This sequence belongs to the snaclec family. As to quaternary structure, heterodimer of a metalloproteinase subunit and a regulatory subunit comprising two polypeptides disulfide-linked (14 kDa and 17 kDa chains). In terms of tissue distribution, expressed by the venom gland.

It is found in the secreted. Functionally, calcium-dependent prothrombin activator. This protein may activate prothrombin via recognition by the regulatory subunit of the calcium ion bound conformation of its gamma-carboxyglutamic acid (GLA) domain, and the subsequent conversion of prothrombin to active thrombin is catalyzed by the catalytic subunit. The polypeptide is Snaclec carinactivase-1 regulatory subunit 14 kDa chain (Echis carinatus (Saw-scaled viper)).